A 258-amino-acid polypeptide reads, in one-letter code: Undecaprenyl-diphosphatase (258 aa).

8 helical membrane passes run 14 to 34 (AAGE…PWLL), 39 to 59 (QGLT…LIYF), 79 to 99 (GKIL…GVLF), 106 to 126 (VFRS…ILHL), 136 to 156 (VALN…ALMP), 176 to 196 (AESA…AAVL), 209 to 229 (AFIA…KFLM), and 237 to 257 (FNIF…TALM).

The protein belongs to the UppP family.

It localises to the cell membrane. It catalyses the reaction di-trans,octa-cis-undecaprenyl diphosphate + H2O = di-trans,octa-cis-undecaprenyl phosphate + phosphate + H(+). Catalyzes the dephosphorylation of undecaprenyl diphosphate (UPP). Confers resistance to bacitracin. The protein is Undecaprenyl-diphosphatase of Elusimicrobium minutum (strain Pei191).